Reading from the N-terminus, the 575-residue chain is Dual specificity protein phosphatase YVH1 (575 aa).

The tract at residues 185–213 (KHNNNNNNNNNNNNNNNNNNNNNNCCTFK) is disordered. The segment covering 187–208 (NNNNNNNNNNNNNNNNNNNNNN) has biased composition (low complexity). One can recognise a Tyrosine-protein phosphatase domain in the interval 283 to 435 (NYKINQEEDT…LLLYEKMNYT (153 aa)). Cys379 (phosphocysteine intermediate) is an active-site residue. Positions 476 and 530 each coordinate Zn(2+).

This sequence belongs to the protein-tyrosine phosphatase family. Non-receptor class dual specificity subfamily. Interacts with PES. The cofactor is Zn(2+).

Its subcellular location is the cytoplasm. It localises to the nucleus. The catalysed reaction is O-phospho-L-tyrosyl-[protein] + H2O = L-tyrosyl-[protein] + phosphate. It catalyses the reaction O-phospho-L-seryl-[protein] + H2O = L-seryl-[protein] + phosphate. In terms of biological role, dual specificity protein phosphatase which dephosphorylates both phosphotyrosine and phosphoserine residues. The chain is Dual specificity protein phosphatase YVH1 from Plasmodium falciparum (isolate 3D7).